The sequence spans 180 residues: uncharacterized protein (180 aa).

An N-terminal signal peptide occupies residues 1–22; sequence MKLRFISSALAAALFAATGSYA. Cys-41 and Cys-81 are joined by a disulfide.

The protein belongs to the fimbrial protein family.

It localises to the fimbrium. This is an uncharacterized protein from Escherichia coli O157:H7.